A 332-amino-acid chain; its full sequence is ADP-L-glycero-D-manno-heptose-6-epimerase (332 aa).

NADP(+) is bound by residues 13–14 (FI), 34–35 (DN), Lys41, Lys56, 78–82 (EGACS), and Asn95. The active-site Proton acceptor is the Tyr142. Lys146 contacts NADP(+). Residue Asn171 participates in substrate binding. NADP(+) is bound by residues Val172 and Lys180. Lys180 functions as the Proton acceptor in the catalytic mechanism. Residues Arg182, His189, 203–206 (FEGC), Arg216, and Tyr295 each bind substrate.

This sequence belongs to the NAD(P)-dependent epimerase/dehydratase family. HldD subfamily. In terms of assembly, homopentamer. Requires NADP(+) as cofactor.

It catalyses the reaction ADP-D-glycero-beta-D-manno-heptose = ADP-L-glycero-beta-D-manno-heptose. It participates in nucleotide-sugar biosynthesis; ADP-L-glycero-beta-D-manno-heptose biosynthesis; ADP-L-glycero-beta-D-manno-heptose from D-glycero-beta-D-manno-heptose 7-phosphate: step 4/4. In terms of biological role, catalyzes the interconversion between ADP-D-glycero-beta-D-manno-heptose and ADP-L-glycero-beta-D-manno-heptose via an epimerization at carbon 6 of the heptose. The protein is ADP-L-glycero-D-manno-heptose-6-epimerase of Thiobacillus denitrificans (strain ATCC 25259 / T1).